Consider the following 664-residue polypeptide: DNA ligase (664 aa).

NAD(+) is bound by residues 32–36 and 80–81; these read DKEYD and SL. The active-site N6-AMP-lysine intermediate is the lysine 122. Arginine 144, glutamate 178, and lysine 314 together coordinate NAD(+). Zn(2+) contacts are provided by cysteine 407, cysteine 410, cysteine 423, and cysteine 429. Positions 587 to 664 constitute a BRCT domain; sequence IDENPFMGKT…NEEEFSNKIK (78 aa).

The protein belongs to the NAD-dependent DNA ligase family. LigA subfamily. Mg(2+) is required as a cofactor. Requires Mn(2+) as cofactor.

It carries out the reaction NAD(+) + (deoxyribonucleotide)n-3'-hydroxyl + 5'-phospho-(deoxyribonucleotide)m = (deoxyribonucleotide)n+m + AMP + beta-nicotinamide D-nucleotide.. In terms of biological role, DNA ligase that catalyzes the formation of phosphodiester linkages between 5'-phosphoryl and 3'-hydroxyl groups in double-stranded DNA using NAD as a coenzyme and as the energy source for the reaction. It is essential for DNA replication and repair of damaged DNA. The protein is DNA ligase of Clostridium botulinum (strain Kyoto / Type A2).